Here is a 426-residue protein sequence, read N- to C-terminus: Protein FAM181B (426 aa).

2 disordered regions span residues 106–157 (GLMG…AAAA) and 226–246 (NLPP…CGPS). The span at 128-141 (PLAAPSAPTVAAPA) shows a compositional bias: low complexity.

This sequence belongs to the FAM181 family.

The protein is Protein FAM181B (FAM181B) of Homo sapiens (Human).